A 163-amino-acid chain; its full sequence is Leptin (163 aa).

The signal sequence occupies residues 1 to 18 (MCWRPLCRLWSYLVYVQA). Cysteine 113 and cysteine 163 are joined by a disulfide.

This sequence belongs to the leptin family. As to expression, not exclusively localized in adipose tissue but is also expressed in liver.

Its subcellular location is the secreted. In terms of biological role, key player in the regulation of energy balance and body weight control. Once released into the circulation, has central and peripheral effects by binding LEPR, found in many tissues, which results in the activation of several major signaling pathways. This Gallus gallus (Chicken) protein is Leptin (LEP).